The following is a 475-amino-acid chain: Aspartyl/glutamyl-tRNA(Asn/Gln) amidotransferase subunit B (475 aa).

The protein belongs to the GatB/GatE family. GatB subfamily. As to quaternary structure, heterotrimer of A, B and C subunits.

The enzyme catalyses L-glutamyl-tRNA(Gln) + L-glutamine + ATP + H2O = L-glutaminyl-tRNA(Gln) + L-glutamate + ADP + phosphate + H(+). It catalyses the reaction L-aspartyl-tRNA(Asn) + L-glutamine + ATP + H2O = L-asparaginyl-tRNA(Asn) + L-glutamate + ADP + phosphate + 2 H(+). Its function is as follows. Allows the formation of correctly charged Asn-tRNA(Asn) or Gln-tRNA(Gln) through the transamidation of misacylated Asp-tRNA(Asn) or Glu-tRNA(Gln) in organisms which lack either or both of asparaginyl-tRNA or glutaminyl-tRNA synthetases. The reaction takes place in the presence of glutamine and ATP through an activated phospho-Asp-tRNA(Asn) or phospho-Glu-tRNA(Gln). In Bacillus cereus (strain ATCC 10987 / NRS 248), this protein is Aspartyl/glutamyl-tRNA(Asn/Gln) amidotransferase subunit B.